Reading from the N-terminus, the 187-residue chain is CASP-like protein 2 (187 aa).

Topologically, residues 1–24 (MKVSAVETGEISQVSAPRKGMIRG) are cytoplasmic. Residues 25–45 (LSIMDFILRIVAAIGTLGSAL) form a helical membrane-spanning segment. Over 46–72 (STGTTRETLPFTTQFVKFRAVFDDLPT) the chain is Extracellular. A helical membrane pass occupies residues 73–93 (FVFFVTSNSIVCGYLVLSLAL). The Cytoplasmic segment spans residues 94-108 (SFFHIIRRSSAAKSR). Residues 109–129 (ILLVFLDTVMFGLLTTGAAAA) traverse the membrane as a helical segment. Over 130 to 163 (GTIVYVSHYGNVNANWFPFCGQYNHFCERISGSL) the chain is Extracellular. The helical transmembrane segment at 164 to 184 (IGSFIAVVIFMIIILMSAVSI) threads the bilayer. Residues 185–187 (SKH) lie on the Cytoplasmic side of the membrane.

The protein belongs to the Casparian strip membrane proteins (CASP) family. As to quaternary structure, homodimer and heterodimers.

The protein resides in the cell membrane. The polypeptide is CASP-like protein 2 (Lotus japonicus (Lotus corniculatus var. japonicus)).